Consider the following 104-residue polypeptide: Large ribosomal subunit protein bL21c (104 aa).

The protein belongs to the bacterial ribosomal protein bL21 family. In terms of assembly, part of the 50S ribosomal subunit.

The protein resides in the plastid. Its subcellular location is the chloroplast. Functionally, this protein binds to 23S rRNA. This chain is Large ribosomal subunit protein bL21c, found in Guillardia theta (Cryptophyte).